Consider the following 289-residue polypeptide: Rhodopsin (289 aa).

Over 1–7 the chain is Extracellular; it reads YLVSPAA. Residues 8 to 32 traverse the membrane as a helical segment; the sequence is YAALGAYMFLLILIGFPVNFLTLYV. Residues 33 to 44 lie on the Cytoplasmic side of the membrane; that stretch reads TLEHKKLRTPLN. A helical membrane pass occupies residues 45–67; the sequence is YILLNLAVADLFMVLGGFTTTMY. Topologically, residues 68 to 81 are extracellular; it reads TSMHGYFVLGRLGC. An intrachain disulfide couples Cys81 to Cys158. A helical transmembrane segment spans residues 82–104; that stretch reads NLEGFFATLGGEIALWSLVVLAI. Residues 105-107 carry the 'Ionic lock' involved in activated form stabilization motif; it reads ERW. The Cytoplasmic portion of the chain corresponds to 105–123; that stretch reads ERWIVVCKPISKFRFTEDN. The chain crosses the membrane as a helical span at residues 124-144; that stretch reads AIMGLAFSWVMALACAVPPLV. Topologically, residues 145-173 are extracellular; that stretch reads GWLRYIPEGMQCTCGVDYYTRAEGFDNES. Asn171 carries N-linked (GlcNAc...) asparagine glycosylation. The chain crosses the membrane as a helical span at residues 174-195; it reads FVIYMFIVHFLIPLSVIFFCYG. Topologically, residues 196-223 are cytoplasmic; the sequence is RLLCAVKEAAAAQQESETTQRAEKEVSR. Residues 224 to 245 traverse the membrane as a helical segment; it reads MVVIMVIGFLVCWLPYASVAWW. Topologically, residues 246 to 257 are extracellular; sequence IFCNQGSDFGPI. The chain crosses the membrane as a helical span at residues 258-279; it reads FMTLPSFFAKRPAIYNPMIYIC. Position 267 is an N6-(retinylidene)lysine (Lys267). At 280–289 the chain is on the cytoplasmic side; it reads MNKQFRHCMI.

It belongs to the G-protein coupled receptor 1 family. Opsin subfamily. Post-translationally, phosphorylated on some or all of the serine and threonine residues present in the C-terminal region. Contains one covalently linked retinal chromophore.

The protein localises to the membrane. It is found in the cell projection. The protein resides in the cilium. It localises to the photoreceptor outer segment. Its function is as follows. Photoreceptor required for image-forming vision at low light intensity. While most salt water fish species use retinal as chromophore, most freshwater fish use 3-dehydroretinal, or a mixture of retinal and 3-dehydroretinal. Light-induced isomerization of 11-cis to all-trans retinal triggers a conformational change that activates signaling via G-proteins. Subsequent receptor phosphorylation mediates displacement of the bound G-protein alpha subunit by arrestin and terminates signaling. This Batrachocottus nikolskii (Fat sculpin) protein is Rhodopsin (rho).